A 236-amino-acid chain; its full sequence is Uridylate kinase (236 aa).

10–13 (KLSG) is a binding site for ATP. Residue Gly52 participates in UMP binding. The ATP site is built by Gly53 and Arg57. Residues Asp72 and 133–140 (TGNPFFTT) each bind UMP. Residues Thr160, Tyr166, and Asp169 each contribute to the ATP site.

This sequence belongs to the UMP kinase family. As to quaternary structure, homohexamer.

It is found in the cytoplasm. It carries out the reaction UMP + ATP = UDP + ADP. It functions in the pathway pyrimidine metabolism; CTP biosynthesis via de novo pathway; UDP from UMP (UMPK route): step 1/1. Inhibited by UTP. Functionally, catalyzes the reversible phosphorylation of UMP to UDP. This chain is Uridylate kinase, found in Polaromonas sp. (strain JS666 / ATCC BAA-500).